Here is a 319-residue protein sequence, read N- to C-terminus: COP9 signalosome complex subunit 6 (319 aa).

The MPN domain maps to V33–I166.

Belongs to the peptidase M67A family. CSN6 subfamily. As to quaternary structure, component of the CSN complex, probably composed of cops1, cops2, cops3, cops4, cops5, cops6, cops7, cops8 and cops9.

The protein localises to the cytoplasm. It localises to the nucleus. Functionally, component of the COP9 signalosome complex (CSN), a complex involved in various cellular and developmental processes. The CSN complex is an essential regulator of the ubiquitin (Ubl) conjugation pathway by mediating the deneddylation of the cullin subunits of E3 ligase complexes, leading to modify the Ubl ligase activity. This is COP9 signalosome complex subunit 6 (cops6) from Xenopus tropicalis (Western clawed frog).